Here is a 138-residue protein sequence, read N- to C-terminus: High mobility group B protein 4 (138 aa).

Disordered regions lie at residues 1-41 and 105-138; these read MKGG…PPSA and LKLA…EDDD. Basic residues predominate over residues 18-29; it reads KTRGRKAGKKTK. The segment at residues 35–104 is a DNA-binding region (HMG box); sequence PKRPPSAFFV…EYIKNVQQYN (70 aa). Residues S123 and S130 each carry the phosphoserine modification. Acidic residues predominate over residues 126 to 138; that stretch reads DEAVSEEEAEDDD.

It belongs to the HMGB family. In terms of tissue distribution, mostly expressed roots and flowers, and, to a lower extent, in stems and leaves.

It localises to the nucleus. The protein resides in the cytoplasm. It is found in the cytosol. In terms of biological role, binds preferentially double-stranded DNA. This chain is High mobility group B protein 4 (HMGB4), found in Arabidopsis thaliana (Mouse-ear cress).